The following is a 571-amino-acid chain: Protein E6 homolog (571 aa).

This sequence belongs to the chordopoxvirinae E6 family.

The protein localises to the virion. In terms of biological role, late protein which may play a role in the virion morphogenesis and have therefore an indirect role on viral transcription ability. The chain is Protein E6 homolog from Vertebrata (FPV).